Consider the following 207-residue polypeptide: Ras-related protein Rab-7a (207 aa).

Thr-2 is modified (N-acetylthreonine). 11 residues coordinate GTP: Ser-17, Gly-18, Val-19, Gly-20, Lys-21, Thr-22, Ser-23, Ser-34, Asn-35, Tyr-37, and Thr-40. Thr-22 serves as a coordination point for Mg(2+). Residues 28-41 carry the Switch 1 motif; the sequence is YVNKKFSNQYKATI. Positions 40 and 63 each coordinate Mg(2+). A GTP-binding site is contributed by Gly-66. Residues 67-82 carry the Switch 2 motif; the sequence is QERFQSLSVAFYRGAD. Ser-72 bears the Phosphoserine mark. The GTP site is built by Asn-125, Lys-126, Asp-128, Ala-156, and Lys-157. Residues Lys-191 and Lys-194 each participate in a glycyl lysine isopeptide (Lys-Gly) (interchain with G-Cter in ubiquitin) cross-link. S-geranylgeranyl cysteine attachment occurs at residues Cys-205 and Cys-207. The residue at position 207 (Cys-207) is a Cysteine methyl ester.

Belongs to the small GTPase superfamily. Rab family. In terms of assembly, interacts with NTRK1/TRKA. Interacts with RILP. Interacts with PSMA7. Interacts with RNF115. Interacts with FYCO1. Interacts with the PIK3C3/VPS34-PIK3R4 complex. The GTP-bound form interacts with OSBPL1A. The GTP-bound form interacts with RAC1. Interacts with CLN3. Interacts with CHM, the substrate-binding subunit of the Rab geranylgeranyltransferase complex. Interacts with C9orf72. Does not interact with HPS4 and the BLOC-3 complex (heterodimer of HPS1 and HPS4). Interacts with CLN5. Interacts with PLEKHM1 (via N- and C-terminus). Interacts with PRPH; the interaction is direct. Interacts with VPS13A. The GDP-bound form interacts with RIMOC1. Interacts with the MON1A-CCZ1B complex and this interaction is enhanced in the presence of RIMOC1. Interacts with VPS39 and VPS41. Forms a ternary complex with LAMP2 and RUFY4; the interaction with LAMP2 is mediated by RUFY4 (via RUN and coiled coil domains). It depends on Mg(2+) as a cofactor. Deubiquitination at Lys-191 and Lys-194 by USP32. In terms of processing, phosphorylated at Ser-72 by LRRK1; phosphorylation is dependent on protein kinase C (PKC) activation of LRRK1. Post-translationally, prenylated. Prenylation is required for association with cellular membranes.

The protein resides in the cytoplasmic vesicle. It localises to the phagosome membrane. Its subcellular location is the late endosome membrane. The protein localises to the lysosome membrane. It is found in the melanosome membrane. The protein resides in the autophagosome membrane. It localises to the lipid droplet. Its subcellular location is the endosome membrane. The protein localises to the mitochondrion membrane. The enzyme catalyses GTP + H2O = GDP + phosphate + H(+). With respect to regulation, regulated by guanine nucleotide exchange factors (GEFs) which promote the exchange of bound GDP for free GTP. Regulated by GTPase activating proteins (GAPs) which increase the GTP hydrolysis activity. Inhibited by GDP dissociation inhibitors (GDIs). The small GTPases Rab are key regulators of intracellular membrane trafficking, from the formation of transport vesicles to their fusion with membranes. Rabs cycle between an inactive GDP-bound form and an active GTP-bound form that is able to recruit to membranes different sets of downstream effectors directly responsible for vesicle formation, movement, tethering and fusion. In its active state, RAB7A binds to a variety of effector proteins playing a key role in the regulation of endo-lysosomal trafficking. Governs early-to-late endosomal maturation, microtubule minus-end as well as plus-end directed endosomal migration and positioning, and endosome-lysosome transport through different protein-protein interaction cascades. Also plays a central role in growth-factor-mediated cell signaling, nutrient-transporter-mediated nutrient uptake, neurotrophin transport in the axons of neurons and lipid metabolism. Also involved in regulation of some specialized endosomal membrane trafficking, such as maturation of melanosomes, pathogen-induced phagosomes (or vacuoles) and autophagosomes. Plays a role in the maturation and acidification of phagosomes that engulf pathogens, such as S.aureus and Mycobacteria. Plays a role in the fusion of phagosomes with lysosomes. In concert with RAC1, plays a role in regulating the formation of RBs (ruffled borders) in osteoclasts. Controls the endosomal trafficking and neurite outgrowth signaling of NTRK1/TRKA. Regulates the endocytic trafficking of the EGF-EGFR complex by regulating its lysosomal degradation. Involved in the ADRB2-stimulated lipolysis through lipophagy, a cytosolic lipase-independent autophagic pathway. Required for the exosomal release of SDCBP, CD63 and syndecan. Required for vesicular trafficking and cell surface expression of ACE2. May play a role in PRPH neuronal intermediate filament assembly. This Oryctolagus cuniculus (Rabbit) protein is Ras-related protein Rab-7a (RAB7A).